We begin with the raw amino-acid sequence, 477 residues long: MSPQTETKASVGFKAGVKEYKLTYYTPEYQTKDTDILAAFRVTPQPGVPPEEAGAAVAAESSTGTWTTVWTDGLTSLDRYKGRCYRIERVVGEKDQYIAYVAYPLDLFEEGSVTNMFTSIVGNVFGFKALRALRLEDLRIPPAYVKTFQGPPHGIQVERDKLNKYGRPLLGCTIKPKLGLSAKNYGRAVYECLRGGLDFTKDDENVNSQPFMRWRDRFLFCAEALYKAQAETGEIKGHYLNATAGTCEEMIKRAVFARELGVPIVMHDYLTGGFTANTSLAHYCRDNGLLLHIHRAMHAVIDRQKNHGIHFRVLAKALRMSGGDHIHSGTVVGKLEGERDITLGFVDLLRDDFVEQDRSRGIYFTQDWVSLPGVLPVASGGIHVWHMPALTEIFGDDSVLQFGGGTLGHPWGNAPGAVANRVALEACVKARNEGRDLAQEGNEIIREACKWSPELAAACEVWKEIVFNFAAVDVLDK.

The propeptide occupies 1–2 (MS). The residue at position 3 (proline 3) is an N-acetylproline. Lysine 14 bears the N6,N6,N6-trimethyllysine mark. Substrate contacts are provided by asparagine 123 and threonine 173. The Proton acceptor role is filled by lysine 175. Residue lysine 177 participates in substrate binding. Lysine 201, aspartate 203, and glutamate 204 together coordinate Mg(2+). At lysine 201 the chain carries N6-carboxylysine. Catalysis depends on histidine 294, which acts as the Proton acceptor. Residues arginine 295, histidine 327, and serine 379 each contribute to the substrate site.

It belongs to the RuBisCO large chain family. Type I subfamily. As to quaternary structure, heterohexadecamer of 8 large chains and 8 small chains; disulfide-linked. The disulfide link is formed within the large subunit homodimers. Mg(2+) serves as cofactor. The disulfide bond which can form in the large chain dimeric partners within the hexadecamer appears to be associated with oxidative stress and protein turnover.

It localises to the plastid. Its subcellular location is the chloroplast. The catalysed reaction is 2 (2R)-3-phosphoglycerate + 2 H(+) = D-ribulose 1,5-bisphosphate + CO2 + H2O. The enzyme catalyses D-ribulose 1,5-bisphosphate + O2 = 2-phosphoglycolate + (2R)-3-phosphoglycerate + 2 H(+). In terms of biological role, ruBisCO catalyzes two reactions: the carboxylation of D-ribulose 1,5-bisphosphate, the primary event in carbon dioxide fixation, as well as the oxidative fragmentation of the pentose substrate in the photorespiration process. Both reactions occur simultaneously and in competition at the same active site. This chain is Ribulose bisphosphate carboxylase large chain, found in Nicotiana sylvestris (Wood tobacco).